The sequence spans 94 residues: Co-chaperonin GroES (94 aa).

This sequence belongs to the GroES chaperonin family. As to quaternary structure, heptamer of 7 subunits arranged in a ring. Interacts with the chaperonin GroEL.

It localises to the cytoplasm. Its function is as follows. Together with the chaperonin GroEL, plays an essential role in assisting protein folding. The GroEL-GroES system forms a nano-cage that allows encapsulation of the non-native substrate proteins and provides a physical environment optimized to promote and accelerate protein folding. GroES binds to the apical surface of the GroEL ring, thereby capping the opening of the GroEL channel. The chain is Co-chaperonin GroES from Streptococcus pneumoniae (strain ATCC BAA-255 / R6).